A 945-amino-acid chain; its full sequence is Netrin receptor UNC5B (945 aa).

A signal peptide spans 1-26 (MRARSGARGALLLALLLCWDPTPSLA). At 27 to 377 (GIDSGGQALP…LEPSGDVALY (351 aa)) the chain is on the extracellular side. Residues 48 to 145 (PHFLLEPEDA…SGTTKSRRAY (98 aa)) form the Ig-like domain. 9 disulfides stabilise this stretch: Cys69/Cys130, Cys81/Cys128, Cys174/Cys225, Cys258/Cys295, Cys262/Cys299, Cys273/Cys285, Cys314/Cys348, Cys318/Cys353, and Cys326/Cys338. The Ig-like C2-type domain occupies 153–242 (KNFDQEPLAK…KRRSTTATVI (90 aa)). Residue Asn222 is glycosylated (N-linked (GlcNAc...) asparagine). 2 consecutive TSP type-1 domains span residues 246–300 (NGGW…TVCP) and 302–354 (DGAW…GLCV). Residue Asn347 is glycosylated (N-linked (GlcNAc...) asparagine). A helical transmembrane segment spans residues 378–398 (AGLVVAVFVVLAVLMAVGVIV). The Cytoplasmic segment spans residues 399–945 (YRRNCRDFDT…LVAMTTDGDC (547 aa)). The S-palmitoyl cysteine moiety is linked to residue Cys403. The region spanning 543–686 (SSVSGTFGCL…LGTYVFTGES (144 aa)) is the ZU5 domain. Position 581 is a phosphotyrosine (Tyr581). The tract at residues 689 to 838 (RSAVKRLQLA…AETPAGSLDA (150 aa)) is UPA domain. Residues 707-725 (SLEYSLRVYCLEDTPAALK) are interaction with DCC. Positions 865–943 (KICNSLDAPN…EMLVAMTTDG (79 aa)) constitute a Death domain.

Belongs to the unc-5 family. Interacts with the cytoplasmic part of DCC. Interacts with GNAI2 via its cytoplasmic part. Interacts (via death domain) with DAPK1 (via death domain). Interacts (via extracellular domain) with FLRT3 (via extracellular domain); the interaction is direct. Interacts (via extracellular domain) with FLRT2 and FLRT3 (via extracellular domain), but has higher affinity for FLRT3. Identified in a complex with FLRT3 and ADGRL3; does not interact with ADGRL3 by itself. Post-translationally, phosphorylated on cytoplasmic tyrosine residues. Proteolytically cleaved by caspases during apoptosis. The cleavage does not take place when the receptor is associated with netrin ligand. Its cleavage by caspases is required to induce apoptosis. In terms of processing, palmitoylation is required for pro-apoptotic activity, but not for location at lipid rafts. Mainly expressed in regions of differentiating neurons. Expressed in the developing sensory ganglia that flank the spinal cord from E12, peaking at E14. Expressed in the roof plate region of the spinal cord from E14.

Its subcellular location is the cell membrane. The protein localises to the membrane raft. Functionally, receptor for netrin required for axon guidance. Mediates axon repulsion of neuronal growth cones in the developing nervous system upon ligand binding. Axon repulsion in growth cones may be caused by its association with DCC that may trigger signaling for repulsion. Functions as a netrin receptor that negatively regulates vascular branching during angiogenesis. Mediates retraction of tip cell filopodia on endothelial growth cones in response to netrin. It also acts as a dependence receptor required for apoptosis induction when not associated with netrin ligand. Mediates apoptosis by activating DAPK1. In the absence of NTN1, activates DAPK1 by reducing its autoinhibitory phosphorylation at Ser-308 thereby increasing its catalytic activity. This is Netrin receptor UNC5B (Unc5b) from Rattus norvegicus (Rat).